The following is a 56-amino-acid chain: Hydrophobic protein LTI6A (56 aa).

The next 2 membrane-spanning stretches (helical) occupy residues 11 to 31 (IILA…CGIE) and 34 to 54 (ICLL…VWVI).

The protein belongs to the UPF0057 (PMP3) family. Expressed in shoot of cold stressed seedlings.

The protein localises to the membrane. Plays a role in the regulation of membrane potential. Could mediate a proton leak. The protein is Hydrophobic protein LTI6A (LTI6A) of Oryza sativa subsp. japonica (Rice).